Reading from the N-terminus, the 1058-residue chain is Zinc finger protein 865 (1058 aa).

Disordered stretches follow at residues 1 to 24, 58 to 134, and 156 to 201; these read MEAN…EDGV, LPCT…PPLF, and GNLK…ACDP. Residues 8–21 show a composition bias toward gly residues; that stretch reads SGAGGGGSSGIGGE. Positions 61–78 are enriched in pro residues; that stretch reads TPGPPPQPPPQPPPPQYD. A compositionally biased stretch (low complexity) spans 93 to 113; sequence SSSSSSSSSSSSSSSSSSSSS. Pro residues predominate over residues 120–133; it reads PPLPPTFGAPPPPL. Low complexity predominate over residues 172-187; it reads GLGTPTGTPGPLTTPS. C2H2-type zinc fingers lie at residues 220-242 and 248-270; these read FPCG…MLVH and YECG…RRCH. Residues 269–342 form a disordered region; it reads CHKDVPPTPT…PPGVAMPPSA (74 aa). A compositionally biased stretch (low complexity) spans 294–324; sequence PVSTASATASSDPAAVSSGPSATPATPATST. 9 C2H2-type zinc fingers span residues 350–372, 378–400, 407–429, 439–461, 546–568, 574–596, 602–624, 664–686, and 692–714; these read FACS…QIIH, FSCS…VKTH, LPCG…QAAH, YPCD…KAAH, FCCG…ERIH, HQCP…HVVH, YKCE…RQVH, YACS…KEAH, and YGCD…KLVH. The tract at residues 459-486 is disordered; the sequence is AAHAPPVATEPAKDGAASVPQPPPPFPP. Residues 721-743 form a disordered region; that stretch reads LLAPTPSGPQSSDGGSSGGGTDA. 9 C2H2-type zinc fingers span residues 791-813, 819-841, 847-869, 875-897, 903-925, 931-953, 959-981, 988-1010, and 1016-1038; these read FSCA…KYVH, LGCG…RRSH, FRCP…QRCH, YRCG…RVVH, FKCG…RRLH, QRCG…QRLH, YRCE…QRAH, LRCP…LAAH, and FRCS…RLMH. Residue K801 forms a Glycyl lysine isopeptide (Lys-Gly) (interchain with G-Cter in SUMO2) linkage. K1039 participates in a covalent cross-link: Glycyl lysine isopeptide (Lys-Gly) (interchain with G-Cter in SUMO2).

The protein belongs to the krueppel C2H2-type zinc-finger protein family.

The protein localises to the nucleus. In terms of biological role, may be involved in transcriptional regulation. This Mus musculus (Mouse) protein is Zinc finger protein 865 (Znf865).